Here is a 77-residue protein sequence, read N- to C-terminus: Acyl carrier protein (77 aa).

The region spanning 2-77 (SDIADRVKKI…DAVKFISDAS (76 aa)) is the Carrier domain. At Ser37 the chain carries O-(pantetheine 4'-phosphoryl)serine.

This sequence belongs to the acyl carrier protein (ACP) family. 4'-phosphopantetheine is transferred from CoA to a specific serine of apo-ACP by AcpS. This modification is essential for activity because fatty acids are bound in thioester linkage to the sulfhydryl of the prosthetic group.

It is found in the cytoplasm. Its pathway is lipid metabolism; fatty acid biosynthesis. In terms of biological role, carrier of the growing fatty acid chain in fatty acid biosynthesis. In Roseobacter denitrificans (strain ATCC 33942 / OCh 114) (Erythrobacter sp. (strain OCh 114)), this protein is Acyl carrier protein.